The chain runs to 818 residues: H(+)/Cl(-) exchange transporter 3 (818 aa).

Residues 1–125 (MESEQLFHRG…WEMTKSLYDA (125 aa)) lie on the Cytoplasmic side of the membrane. Residues 13–17 (RNSYN) carry the Di-leucine internalization motif; mediates targeting to late endosome and lysosome membranes motif. The IP motif; mediates targeting to recycling endosomes motif lies at 18–19 (SI). Short sequence motifs (di-leucine internalization motif; mediates targeting to late endosome and lysosome membranes) lie at residues 28–29 (LL), 46–47 (LL), and 71–75 (LLDLL). A helical transmembrane segment spans residues 126-163 (WSGWLVVTLTGLASGALAGLIDIAADWMTDLKEGICLS). The N-linked (GlcNAc...) asparagine glycan is linked to Asn-177. A helical transmembrane segment spans residues 209–232 (MNYIMYIFWALSFAFLAVSLVKVF). The Selectivity filter part_1 motif lies at 238-242 (GSGIP). Ser-239 contacts chloride. Positions 241-248 (IPEIKTIL) form an intramembrane region, helical. The next 2 membrane-spanning stretches (helical) occupy residues 258–276 (GKWT…VASG) and 282–301 (EGPL…YLFP). The Selectivity filter part_2 motif lies at 280-284 (GKEGP). 2 intramembrane regions (helical) span residues 313 to 325 (VLSA…VSVA) and 329 to 337 (PIGGVLFSL). The next 3 membrane-spanning stretches (helical) occupy residues 349 to 367 (LWRS…RSIN), 391 to 416 (FPFI…AWCR), and 423 to 443 (FGKY…VIAF). Residues Asn-451 and Asn-479 are each glycosylated (N-linked (GlcNAc...) asparagine). The next 2 membrane-spanning stretches (helical) occupy residues 500 to 520 (IWQL…TFGI) and 525 to 544 (GLFI…VGIA). The short motif at 525-529 (GLFIP) is the Selectivity filter part_3 element. Chloride is bound at residue Phe-527. Intramembrane regions (helical) lie at residues 572-586 (GLYA…LGGV) and 590-601 (TVSLVVIVFELT). Residues 602–605 (GGLE) constitute an intramembrane region (note=Loop between two helices). The helical transmembrane segment at 606–624 (YIVPLMAAVMTSKWVGDAF) threads the bilayer. Over 625-818 (GREGIYEAHI…NQDPASIMFN (194 aa)) the chain is Cytoplasmic. Chloride is bound at residue Tyr-630. CBS domains are found at residues 658–722 (MRPR…ARKK) and 755–812 (LDMS…NQDP). Residues 689–691 (YNG) and 796–799 (TKKD) each bind ATP.

Belongs to the chloride channel (TC 2.A.49) family. ClC-3/CLCN3 subfamily. In terms of assembly, monomer and homodimer. Forms heterodimers with CLCN4. In terms of processing, N-glycosylated. Detected in kidney, in the apical part of proximal tubule cells (at protein level). Expressed at high levels in the kidney while a low level expression is seen in the brain. Within the brain, it is prominent in the hippocampus, cerebral cortex and olfactory bulb. In terms of tissue distribution, brain, pancreas, kidney, liver, lung, retina, olfactory bulb, and spinal cord. As to expression, pancreas, kidney, liver, lung and retina. Brain, heart, pancreas, kidney, liver, lung, retina, olfactory bulb, and spinal cord. In terms of tissue distribution, expressed at high levels in the liver and at low levels in the brain.

It is found in the cytoplasmic vesicle. The protein localises to the secretory vesicle membrane. Its subcellular location is the lysosome membrane. The protein resides in the late endosome membrane. It localises to the cell membrane. It is found in the early endosome membrane. The protein localises to the recycling endosome membrane. Inhibited by Cd(2+). Functionally, may influence large dense-core vesicle exocytosis in adrenal chromaffin cells. In terms of biological role, strongly outwardly rectifying, electrogenic H(+)/Cl(-)exchanger which mediates the exchange of chloride ions against protons. The CLC channel family contains both chloride channels and proton-coupled anion transporters that exchange chloride or another anion for protons. The presence of conserved gating glutamate residues is typical for family members that function as antiporters. Its function is as follows. Strongly outwardly rectifying, electrogenic H(+)/Cl(-)exchanger which mediates the exchange of chloride ions against protons. Facilitates endosomal acidification and chloride accumulation in hepatocytes. Strongly outwardly rectifying, electrogenic H(+)/Cl(-)exchanger which mediates the exchange of chloride ions against protons. The protein is H(+)/Cl(-) exchange transporter 3 (Clcn3) of Mus musculus (Mouse).